Here is a 499-residue protein sequence, read N- to C-terminus: Flotillin-like protein 2 (499 aa).

Cys-37 carries the S-palmitoyl cysteine lipid modification. Residues 243-319 (LREEAKVKAE…LRLTEKLKAE (77 aa)) are a coiled coil.

Belongs to the band 7/mec-2 family. Flotillin subfamily. Post-translationally, may be palmitoylated.

Its subcellular location is the cell membrane. The protein resides in the membrane. The protein localises to the caveola. Its function is as follows. May act as a scaffolding protein within caveolar membranes, functionally participating in formation of caveolae or caveolae-like vesicles. In Oryza sativa subsp. japonica (Rice), this protein is Flotillin-like protein 2 (FLOT2).